Here is an 831-residue protein sequence, read N- to C-terminus: Translation initiation factor IF-2 (831 aa).

The 171-residue stretch at 329–499 (TRAPVVTVMG…LLISEMQDLK (171 aa)) folds into the tr-type G domain. The G1 stretch occupies residues 338–345 (GHVDHGKT). 338 to 345 (GHVDHGKT) contributes to the GTP binding site. The interval 363-367 (GITQH) is G2. A G3 region spans residues 385 to 388 (DTPG). Residues 385-389 (DTPGH) and 439-442 (NKID) contribute to the GTP site. The G4 stretch occupies residues 439-442 (NKID). Residues 475–477 (SAL) form a G5 region.

This sequence belongs to the TRAFAC class translation factor GTPase superfamily. Classic translation factor GTPase family. IF-2 subfamily.

Its subcellular location is the cytoplasm. One of the essential components for the initiation of protein synthesis. Protects formylmethionyl-tRNA from spontaneous hydrolysis and promotes its binding to the 30S ribosomal subunits. Also involved in the hydrolysis of GTP during the formation of the 70S ribosomal complex. This chain is Translation initiation factor IF-2 (infB), found in Rickettsia prowazekii (strain Madrid E).